Consider the following 193-residue polypeptide: MTDYLLLFVGTVLVNNFVLVKFLGLCPFMGVSKKLETAMGMGLATTFVMTLASICAWLIDTWILIPLNLIYLRTMAFILVIAVVVQFTEMVVRKTSPVLYRLLGIFLPLITTNCAVLGVALLNINLGHNFLQSALYGFSAAVGFSLVMVLFAAIRERLAVADVPAPFRGNAIALITAGLMSLAFMGFSGLVKL.

The next 6 helical transmembrane spans lie at 5–25 (LLLFVGTVLVNNFVLVKFLGL), 47–67 (FVMTLASICAWLIDTWILIPL), 72–92 (LRTMAFILVIAVVVQFTEMVV), 102–122 (LLGIFLPLITTNCAVLGVALL), 134–154 (ALYGFSAAVGFSLVMVLFAAI), and 171–191 (AIALITAGLMSLAFMGFSGLV).

It belongs to the NqrDE/RnfAE family. The complex is composed of six subunits: RsxA, RsxB, RsxC, RsxD, RsxE and RsxG.

It localises to the cell inner membrane. Its function is as follows. Part of a membrane-bound complex that couples electron transfer with translocation of ions across the membrane. Required to maintain the reduced state of SoxR. The protein is Ion-translocating oxidoreductase complex subunit A of Escherichia coli O45:K1 (strain S88 / ExPEC).